A 111-amino-acid polypeptide reads, in one-letter code: UPF0145 protein RBAM_010660 (111 aa).

The protein belongs to the UPF0145 family.

This is UPF0145 protein RBAM_010660 from Bacillus velezensis (strain DSM 23117 / BGSC 10A6 / LMG 26770 / FZB42) (Bacillus amyloliquefaciens subsp. plantarum).